Reading from the N-terminus, the 110-residue chain is MEVTAKLRGARLSAQKARLVADLVRGKPVAEALDVLAYSPKKAAKVVKKVLQSAIANAEENNGMDIDELRVSTICVDEGMTLKRIQPRAKGRADRILKRTCHITVKVAEK.

It belongs to the universal ribosomal protein uL22 family. As to quaternary structure, part of the 50S ribosomal subunit.

Functionally, this protein binds specifically to 23S rRNA; its binding is stimulated by other ribosomal proteins, e.g. L4, L17, and L20. It is important during the early stages of 50S assembly. It makes multiple contacts with different domains of the 23S rRNA in the assembled 50S subunit and ribosome. The globular domain of the protein is located near the polypeptide exit tunnel on the outside of the subunit, while an extended beta-hairpin is found that lines the wall of the exit tunnel in the center of the 70S ribosome. This Chromohalobacter salexigens (strain ATCC BAA-138 / DSM 3043 / CIP 106854 / NCIMB 13768 / 1H11) protein is Large ribosomal subunit protein uL22.